Reading from the N-terminus, the 88-residue chain is Small ribosomal subunit protein bS16c (88 aa).

It belongs to the bacterial ribosomal protein bS16 family.

It is found in the plastid. The protein localises to the chloroplast. This chain is Small ribosomal subunit protein bS16c, found in Jasminum nudiflorum (Winter jasmine).